Here is a 744-residue protein sequence, read N- to C-terminus: Serine/threonine-protein kinase GM11705 (744 aa).

A compositionally biased stretch (polar residues) spans 17 to 35 (VLSSHQPSPSATHPQSVPS). 2 disordered regions span residues 17–38 (VLSS…SKAN) and 54–78 (NVQE…PEKE). Doublecortin domains follow at residues 154-240 (LRIK…VEYN) and 309-392 (RIVT…AEDF). The 259-residue stretch at 473 to 731 (YTLGRIIGDG…SEDILDHPWT (259 aa)) folds into the Protein kinase domain. ATP-binding positions include 479-487 (IGDGNFAIV) and Lys502. The active-site Proton acceptor is Asp594.

It belongs to the protein kinase superfamily. CAMK Ser/Thr protein kinase family. CaMK subfamily.

The enzyme catalyses L-seryl-[protein] + ATP = O-phospho-L-seryl-[protein] + ADP + H(+). It carries out the reaction L-threonyl-[protein] + ATP = O-phospho-L-threonyl-[protein] + ADP + H(+). The chain is Serine/threonine-protein kinase GM11705 from Drosophila sechellia (Fruit fly).